Reading from the N-terminus, the 417-residue chain is Blood group Rh(CE) polypeptide (417 aa).

A run of 11 helical transmembrane segments spans residues C12–T32, L44–F64, V77–F97, I125–V145, F172–P192, T203–V223, M238–L258, I265–C285, L287–G307, I331–T351, and M358–L378.

This sequence belongs to the ammonium transporter (TC 2.A.49) family. Rh subfamily. In terms of assembly, heterotrimer; a RHCE monomer interacts with a RHAG homodimer. Component of the ankyrin-1 complex in the erythrocyte, composed of ANK1, RHCE, RHAG, SLC4A1, EPB42, GYPA, GYPB and AQP1. Interacts (via the N- and C-terminal) with ANK1 (via ANk 1-5 repeats); mediates the primary membrane attachment site for ANK1. Restricted to tissues or cell lines expressing erythroid characters. Isoform 4g and isoform RhPI-Alpha are expressed in immature erythroblasts but not in mature erythroblasts.

The protein localises to the membrane. Component of the ankyrin-1 complex, a multiprotein complex involved in the stability and shape of the erythrocyte membrane. Mediates the primary membrane attachment site for ANK1 when associated with RHAG. May participate in the ammonium and carbon dioxide transport through the heterotrimer form. This Homo sapiens (Human) protein is Blood group Rh(CE) polypeptide.